Consider the following 132-residue polypeptide: MTMTDPIADMLTRVRNANMVRHEKLELPASNIKKEIAEILKSEGFIKNVEYVEDDKQGVLRLFLKYGQNDERVITGLKRISKPGLRVYAKASEMPKVLNGLGIALVSTSEGVITDKEARKRNVGGEIIAYVW.

It belongs to the universal ribosomal protein uS8 family. As to quaternary structure, part of the 30S ribosomal subunit. Contacts proteins S5 and S12.

In terms of biological role, one of the primary rRNA binding proteins, it binds directly to 16S rRNA central domain where it helps coordinate assembly of the platform of the 30S subunit. This Staphylococcus aureus (strain USA300) protein is Small ribosomal subunit protein uS8.